We begin with the raw amino-acid sequence, 359 residues long: N-acetyl-gamma-glutamyl-phosphate reductase (359 aa).

The active site involves cysteine 162.

The protein belongs to the NAGSA dehydrogenase family. Type 1 subfamily.

Its subcellular location is the cytoplasm. It catalyses the reaction N-acetyl-L-glutamate 5-semialdehyde + phosphate + NADP(+) = N-acetyl-L-glutamyl 5-phosphate + NADPH + H(+). Its pathway is amino-acid biosynthesis; L-arginine biosynthesis; N(2)-acetyl-L-ornithine from L-glutamate: step 3/4. In terms of biological role, catalyzes the NADPH-dependent reduction of N-acetyl-5-glutamyl phosphate to yield N-acetyl-L-glutamate 5-semialdehyde. In Prochlorococcus marinus (strain NATL2A), this protein is N-acetyl-gamma-glutamyl-phosphate reductase.